A 72-amino-acid chain; its full sequence is Large ribosomal subunit protein bL31 (72 aa).

Residues Cys-16, Cys-18, Cys-38, and Cys-41 each coordinate Zn(2+).

This sequence belongs to the bacterial ribosomal protein bL31 family. Type A subfamily. In terms of assembly, part of the 50S ribosomal subunit. Zn(2+) is required as a cofactor.

Binds the 23S rRNA. The chain is Large ribosomal subunit protein bL31 from Francisella tularensis subsp. holarctica (strain LVS).